Here is a 90-residue protein sequence, read N- to C-terminus: Probable Fe(2+)-trafficking protein (90 aa).

Belongs to the Fe(2+)-trafficking protein family.

Could be a mediator in iron transactions between iron acquisition and iron-requiring processes, such as synthesis and/or repair of Fe-S clusters in biosynthetic enzymes. This chain is Probable Fe(2+)-trafficking protein, found in Chromobacterium violaceum (strain ATCC 12472 / DSM 30191 / JCM 1249 / CCUG 213 / NBRC 12614 / NCIMB 9131 / NCTC 9757 / MK).